The sequence spans 367 residues: 3-isopropylmalate dehydrogenase (367 aa).

80-93 (GKEWTHLPADEQPE) serves as a coordination point for NAD(+). Arg101, Arg111, Arg140, and Asp230 together coordinate substrate. Mg(2+) contacts are provided by Asp230, Asp254, and Asp258. 288–300 (GSAPDLKGKNIAN) lines the NAD(+) pocket.

Belongs to the isocitrate and isopropylmalate dehydrogenases family. LeuB type 1 subfamily. Homodimer. Requires Mg(2+) as cofactor. It depends on Mn(2+) as a cofactor.

It localises to the cytoplasm. It carries out the reaction (2R,3S)-3-isopropylmalate + NAD(+) = 4-methyl-2-oxopentanoate + CO2 + NADH. Its pathway is amino-acid biosynthesis; L-leucine biosynthesis; L-leucine from 3-methyl-2-oxobutanoate: step 3/4. Its function is as follows. Catalyzes the oxidation of 3-carboxy-2-hydroxy-4-methylpentanoate (3-isopropylmalate) to 3-carboxy-4-methyl-2-oxopentanoate. The product decarboxylates to 4-methyl-2 oxopentanoate. The sequence is that of 3-isopropylmalate dehydrogenase (leuB) from Buchnera aphidicola subsp. Cinara cedri (strain Cc).